The following is a 156-amino-acid chain: Small ribosomal subunit protein uS7 (156 aa).

The protein belongs to the universal ribosomal protein uS7 family. Part of the 30S ribosomal subunit. Contacts proteins S9 and S11.

Its function is as follows. One of the primary rRNA binding proteins, it binds directly to 16S rRNA where it nucleates assembly of the head domain of the 30S subunit. Is located at the subunit interface close to the decoding center, probably blocks exit of the E-site tRNA. This chain is Small ribosomal subunit protein uS7, found in Deinococcus deserti (strain DSM 17065 / CIP 109153 / LMG 22923 / VCD115).